Reading from the N-terminus, the 343-residue chain is Ribosomal RNA small subunit methyltransferase C (343 aa).

It belongs to the methyltransferase superfamily. RsmC family. Monomer.

The protein localises to the cytoplasm. The catalysed reaction is guanosine(1207) in 16S rRNA + S-adenosyl-L-methionine = N(2)-methylguanosine(1207) in 16S rRNA + S-adenosyl-L-homocysteine + H(+). Its function is as follows. Specifically methylates the guanine in position 1207 of 16S rRNA in the 30S particle. The polypeptide is Ribosomal RNA small subunit methyltransferase C (Escherichia coli O17:K52:H18 (strain UMN026 / ExPEC)).